The chain runs to 356 residues: Dihydroorotate dehydrogenase (quinone) (356 aa).

FMN is bound by residues 66 to 70 (AGFDK) and T90. Residue K70 coordinates substrate. 115–119 (NRMGF) provides a ligand contact to substrate. FMN-binding residues include N143 and N176. Residue N176 coordinates substrate. Residue S179 is the Nucleophile of the active site. N181 contributes to the substrate binding site. 2 residues coordinate FMN: K212 and T240. 241–242 (NT) provides a ligand contact to substrate. Residues G266, G295, and 316–317 (YT) contribute to the FMN site.

Belongs to the dihydroorotate dehydrogenase family. Type 2 subfamily. As to quaternary structure, monomer. Requires FMN as cofactor.

It is found in the cell membrane. The catalysed reaction is (S)-dihydroorotate + a quinone = orotate + a quinol. The protein operates within pyrimidine metabolism; UMP biosynthesis via de novo pathway; orotate from (S)-dihydroorotate (quinone route): step 1/1. In terms of biological role, catalyzes the conversion of dihydroorotate to orotate with quinone as electron acceptor. The protein is Dihydroorotate dehydrogenase (quinone) of Rhodococcus erythropolis (strain PR4 / NBRC 100887).